We begin with the raw amino-acid sequence, 136 residues long: Transcription antitermination protein NusB (136 aa).

This sequence belongs to the NusB family.

Functionally, involved in transcription antitermination. Required for transcription of ribosomal RNA (rRNA) genes. Binds specifically to the boxA antiterminator sequence of the ribosomal RNA (rrn) operons. The protein is Transcription antitermination protein NusB of Salinispora arenicola (strain CNS-205).